A 350-amino-acid chain; its full sequence is Holliday junction branch migration complex subunit RuvB (350 aa).

The segment at Ala4–Tyr184 is large ATPase domain (RuvB-L). ATP contacts are provided by residues Ile23, Arg24, Gly65, Lys68, Thr69, Thr70, Glu131–Phe133, Arg174, Tyr184, and Arg221. Thr69 contributes to the Mg(2+) binding site. A small ATPAse domain (RuvB-S) region spans residues Ser185–Asp255. Positions Glu258–Val350 are head domain (RuvB-H). 3 residues coordinate DNA: Arg294, Arg313, and Arg318.

The protein belongs to the RuvB family. As to quaternary structure, homohexamer. Forms an RuvA(8)-RuvB(12)-Holliday junction (HJ) complex. HJ DNA is sandwiched between 2 RuvA tetramers; dsDNA enters through RuvA and exits via RuvB. An RuvB hexamer assembles on each DNA strand where it exits the tetramer. Each RuvB hexamer is contacted by two RuvA subunits (via domain III) on 2 adjacent RuvB subunits; this complex drives branch migration. In the full resolvosome a probable DNA-RuvA(4)-RuvB(12)-RuvC(2) complex forms which resolves the HJ.

It localises to the cytoplasm. The enzyme catalyses ATP + H2O = ADP + phosphate + H(+). Functionally, the RuvA-RuvB-RuvC complex processes Holliday junction (HJ) DNA during genetic recombination and DNA repair, while the RuvA-RuvB complex plays an important role in the rescue of blocked DNA replication forks via replication fork reversal (RFR). RuvA specifically binds to HJ cruciform DNA, conferring on it an open structure. The RuvB hexamer acts as an ATP-dependent pump, pulling dsDNA into and through the RuvAB complex. RuvB forms 2 homohexamers on either side of HJ DNA bound by 1 or 2 RuvA tetramers; 4 subunits per hexamer contact DNA at a time. Coordinated motions by a converter formed by DNA-disengaged RuvB subunits stimulates ATP hydrolysis and nucleotide exchange. Immobilization of the converter enables RuvB to convert the ATP-contained energy into a lever motion, pulling 2 nucleotides of DNA out of the RuvA tetramer per ATP hydrolyzed, thus driving DNA branch migration. The RuvB motors rotate together with the DNA substrate, which together with the progressing nucleotide cycle form the mechanistic basis for DNA recombination by continuous HJ branch migration. Branch migration allows RuvC to scan DNA until it finds its consensus sequence, where it cleaves and resolves cruciform DNA. This Stutzerimonas stutzeri (strain A1501) (Pseudomonas stutzeri) protein is Holliday junction branch migration complex subunit RuvB.